The chain runs to 360 residues: S-adenosylmethionine:tRNA ribosyltransferase-isomerase (360 aa).

This sequence belongs to the QueA family. As to quaternary structure, monomer.

Its subcellular location is the cytoplasm. It catalyses the reaction 7-aminomethyl-7-carbaguanosine(34) in tRNA + S-adenosyl-L-methionine = epoxyqueuosine(34) in tRNA + adenine + L-methionine + 2 H(+). The protein operates within tRNA modification; tRNA-queuosine biosynthesis. Its function is as follows. Transfers and isomerizes the ribose moiety from AdoMet to the 7-aminomethyl group of 7-deazaguanine (preQ1-tRNA) to give epoxyqueuosine (oQ-tRNA). The sequence is that of S-adenosylmethionine:tRNA ribosyltransferase-isomerase from Rhizobium meliloti (strain 1021) (Ensifer meliloti).